Here is a 154-residue protein sequence, read N- to C-terminus: Superoxide dismutase [Cu-Zn] (154 aa).

3 residues coordinate Cu cation: His47, His49, and His64. An intrachain disulfide couples Cys58 to Cys147. Zn(2+) is bound by residues His64, His72, His81, and Asp84. His121 lines the Cu cation pocket. Residues 124 to 137 (TDDLGKGENEESKK) are compositionally biased toward basic and acidic residues. A disordered region spans residues 124 to 144 (TDDLGKGENEESKKTGNAGTR). Arg144 lines the substrate pocket.

This sequence belongs to the Cu-Zn superoxide dismutase family. Homodimer. Cu cation serves as cofactor. Requires Zn(2+) as cofactor.

The protein localises to the cytoplasm. The catalysed reaction is 2 superoxide + 2 H(+) = H2O2 + O2. Destroys radicals which are normally produced within the cells and which are toxic to biological systems. The protein is Superoxide dismutase [Cu-Zn] (sod1) of Botryotinia fuckeliana (Noble rot fungus).